Consider the following 428-residue polypeptide: Ectonucleoside triphosphate diphosphohydrolase 5 (428 aa).

Positions 1 to 24 are cleaved as a signal peptide; that stretch reads MTSSRLPVLLALVFSSLSPVLSHS. Catalysis depends on E172, which acts as the Proton acceptor. N-linked (GlcNAc...) asparagine glycosylation occurs at N232. 2 cysteine pairs are disulfide-bonded: C272-C303 and C363-C377.

Belongs to the GDA1/CD39 NTPase family. As to quaternary structure, monomer; active form. Homodimer; disulfide-linked. Homodimers are enzymatically inactive. Ca(2+) serves as cofactor. Mg(2+) is required as a cofactor.

Its subcellular location is the endoplasmic reticulum. It localises to the secreted. The enzyme catalyses a ribonucleoside 5'-diphosphate + H2O = a ribonucleoside 5'-phosphate + phosphate + H(+). It carries out the reaction GDP + H2O = GMP + phosphate + H(+). It catalyses the reaction UDP + H2O = UMP + phosphate + H(+). The catalysed reaction is IDP + H2O = IMP + phosphate + H(+). The enzyme catalyses CDP + H2O = CMP + phosphate + H(+). It carries out the reaction ADP + H2O = AMP + phosphate + H(+). It participates in protein modification; protein glycosylation. Hydrolyzes nucleoside diphosphates with a preference for GDP, IDP and UDP compared to ADP and CDP. In the lumen of the endoplasmic reticulum, hydrolyzes UDP that acts as an end-product feedback inhibitor of the UDP-Glc:glycoprotein glucosyltransferases. UMP can be transported back by an UDP-sugar antiporter to the cytosol where it is consumed to regenerate UDP-glucose. Therefore, it positively regulates protein reglucosylation by clearing UDP from the ER lumen and by promoting the regeneration of UDP-glucose. Protein reglucosylation is essential to proper glycoprotein folding and quality control in the ER. This is Ectonucleoside triphosphate diphosphohydrolase 5 (ENTPD5) from Gallus gallus (Chicken).